The primary structure comprises 163 residues: Nucleotide-binding protein CJE0423 (163 aa).

Belongs to the YajQ family.

Nucleotide-binding protein. The polypeptide is Nucleotide-binding protein CJE0423 (Campylobacter jejuni (strain RM1221)).